Here is a 370-residue protein sequence, read N- to C-terminus: Ubiquitin-binding protein Rv1468c (370 aa).

Positions 1–72 are UBA; sequence MSFVVANTEF…QVLSAQAAAF (72 aa). One can recognise a PE domain in the interval 1–93; that stretch reads MSFVVANTEF…AQAYAAAEAT (93 aa).

This sequence belongs to the mycobacterial PE family. PGRS subfamily. Interacts directly with host polyubiquitin in a UBA-dependent manner.

Its subcellular location is the secreted. It is found in the cell wall. The protein resides in the cell surface. Its function is as follows. Mediates direct binding of host ubiquitin (Ub) to the mycobacterial surface, which triggers host xenophagy. Interaction between Rv1468c and ubiquitin recruits autophagy receptor p62 to deliver mycobacteria into LC3-associated autophagosomes. It could be a viable evolutionary strategy adopted by M.tuberculosis to maintain long-term intracellular survival through self-controlling its intracellular bacterial loads to avoid excessive host inflammatory immune responses. The chain is Ubiquitin-binding protein Rv1468c from Mycobacterium tuberculosis (strain ATCC 25618 / H37Rv).